The following is a 157-amino-acid chain: Aspartate carbamoyltransferase regulatory chain (157 aa).

Cys-108, Cys-113, Cys-138, and Cys-141 together coordinate Zn(2+).

The protein belongs to the PyrI family. Contains catalytic and regulatory chains. Zn(2+) serves as cofactor.

Its function is as follows. Involved in allosteric regulation of aspartate carbamoyltransferase. The chain is Aspartate carbamoyltransferase regulatory chain from Ignicoccus hospitalis (strain KIN4/I / DSM 18386 / JCM 14125).